We begin with the raw amino-acid sequence, 492 residues long: Metal cation symporter ZIP14 (492 aa).

The first 30 residues, 1–30 (MKLLLLHPAFQSCLLLTLLGLWRTTPEAHA), serve as a signal peptide directing secretion. Residues 31–157 (SSLGAPAISA…PSAVEVWGYG (127 aa)) are Extracellular-facing. N-linked (GlcNAc...) asparagine glycans are attached at residues N77, N87, and N102. Residues 158-178 (LLCVTVISLCSLLGASVVPFM) form a helical membrane-spanning segment. Topologically, residues 179–186 (KKTFYKRL) are cytoplasmic. Residues 187–207 (LLYFIALAIGTLYSNALFQLI) traverse the membrane as a helical segment. Topologically, residues 208–224 (PEAFGFNPLEDYYVSKS) are extracellular. Residues 225–245 (AVVFGGFYLFFFTEKILKILL) traverse the membrane as a helical segment. The Cytoplasmic portion of the chain corresponds to 246 to 397 (KQKNEHHHGH…LLNAGMSIQQ (152 aa)). The short motif at 251 to 258 (HHHGHSHY) is the HHHGHXHX-motif element. The short motif at 376 to 381 (EEFPHE) is the XEXPHE-motif element. The helical transmembrane segment at 398–418 (ALFFNFLSACCCYLGLAFGIL) threads the bilayer. Residues 419 to 424 (AGSHFS) lie on the Extracellular side of the membrane. The chain crosses the membrane as a helical span at residues 425-445 (ANWIFALAGGMFLYISLADMF). The Cytoplasmic portion of the chain corresponds to 446-460 (PEMNEVCQEDERKGS). Residues 461-481 (ILIPFIIQNLGLLTGFTIMVV) traverse the membrane as a helical segment. At 482-492 (LTMYSGQIQIG) the chain is on the extracellular side.

It belongs to the ZIP transporter (TC 2.A.5) family. In terms of assembly, homotrimer. In terms of processing, ubiquitinated. Ubiquitination occurs upon iron depletion. The ubiquitinated form undergoes proteasomal degradation. Post-translationally, N-glycosylated. N-glycosylation at Asn-102 is required for iron-regulated extraction of the transporter from membranes and subsequent proteasomal degradation. As to expression, ubiquitously expressed, with higher expression in liver, pancreas, fetal liver, thyroid gland, left and right ventricle, right atrium and fetal heart. Weakly expressed in spleen, thymus, and peripheral blood leukocytes. Expressed in liver and in brain by large neurons in the globus pallidus, the insular cortex and the dentate nucleus and to a lower extent in the putamen and the caudate nucleus (at protein level). Expressed in osteoblasts and giant osteoclast-like cells, but not in osteocytes found osteoblastoma and giant cell tumors (at protein level). Expressed by microvascular capillary endothelial cells that constitute the blood-brain barrier (at protein level). Expressed by macrophages. In terms of tissue distribution, widely expressed but not detected in brain, heart, skeletal muscle, placenta and fetal skin.

The protein resides in the cell membrane. It localises to the apical cell membrane. The protein localises to the basolateral cell membrane. Its subcellular location is the early endosome membrane. It is found in the late endosome membrane. The protein resides in the lysosome membrane. It carries out the reaction Zn(2+)(out) + 2 hydrogencarbonate(out) = Zn(2+)(in) + 2 hydrogencarbonate(in). The catalysed reaction is Mn(2+)(out) + 2 hydrogencarbonate(out) = Mn(2+)(in) + 2 hydrogencarbonate(in). It catalyses the reaction Fe(2+)(out) + 2 hydrogencarbonate(out) = Fe(2+)(in) + 2 hydrogencarbonate(in). The enzyme catalyses Cd(2+)(out) + 2 hydrogencarbonate(out) = Cd(2+)(in) + 2 hydrogencarbonate(in). Electroneutral transporter of the plasma membrane mediating the cellular uptake of the divalent metal cations zinc, manganese and iron that are important for tissue homeostasis, metabolism, development and immunity. Functions as an energy-dependent symporter, transporting through the membranes an electroneutral complex composed of a divalent metal cation and two bicarbonate anions. Beside these endogenous cellular substrates, can also import cadmium a non-essential metal which is cytotoxic and carcinogenic. Controls the cellular uptake by the intestinal epithelium of systemic zinc, which is in turn required to maintain tight junctions and the intestinal permeability. Modifies the activity of zinc-dependent phosphodiesterases, thereby indirectly regulating G protein-coupled receptor signaling pathways important for gluconeogenesis and chondrocyte differentiation. Regulates insulin receptor signaling, glucose uptake, glycogen synthesis and gluconeogenesis in hepatocytes through the zinc-dependent intracellular catabolism of insulin. Through zinc cellular uptake also plays a role in the adaptation of cells to endoplasmic reticulum stress. Major manganese transporter of the basolateral membrane of intestinal epithelial cells, it plays a central role in manganese systemic homeostasis through intestinal manganese uptake. Also involved in manganese extracellular uptake by cells of the blood-brain barrier. May also play a role in manganese and zinc homeostasis participating in their elimination from the blood through the hepatobiliary excretion. Also functions in the extracellular uptake of free iron. May also function intracellularly and mediate the transport from endosomes to cytosol of iron endocytosed by transferrin. Plays a role in innate immunity by regulating the expression of cytokines by activated macrophages. In Homo sapiens (Human), this protein is Metal cation symporter ZIP14.